Consider the following 489-residue polypeptide: UDP-N-acetylmuramoyl-L-alanyl-D-glutamate--2,6-diaminopimelate ligase (489 aa).

Residue Ser-32 participates in UDP-N-acetyl-alpha-D-muramoyl-L-alanyl-D-glutamate binding. 113-119 (GTNGKTT) contributes to the ATP binding site. UDP-N-acetyl-alpha-D-muramoyl-L-alanyl-D-glutamate-binding positions include 154–155 (TT), Ser-181, Gln-187, and Arg-189. Position 221 is an N6-carboxylysine (Lys-221). Meso-2,6-diaminopimelate-binding positions include Arg-381, 405 to 408 (DNPR), Gly-456, and Glu-460. The Meso-diaminopimelate recognition motif signature appears at 405 to 408 (DNPR).

Belongs to the MurCDEF family. MurE subfamily. The cofactor is Mg(2+). Carboxylation is probably crucial for Mg(2+) binding and, consequently, for the gamma-phosphate positioning of ATP.

The protein localises to the cytoplasm. It catalyses the reaction UDP-N-acetyl-alpha-D-muramoyl-L-alanyl-D-glutamate + meso-2,6-diaminopimelate + ATP = UDP-N-acetyl-alpha-D-muramoyl-L-alanyl-gamma-D-glutamyl-meso-2,6-diaminopimelate + ADP + phosphate + H(+). The protein operates within cell wall biogenesis; peptidoglycan biosynthesis. Catalyzes the addition of meso-diaminopimelic acid to the nucleotide precursor UDP-N-acetylmuramoyl-L-alanyl-D-glutamate (UMAG) in the biosynthesis of bacterial cell-wall peptidoglycan. The polypeptide is UDP-N-acetylmuramoyl-L-alanyl-D-glutamate--2,6-diaminopimelate ligase (Gloeobacter violaceus (strain ATCC 29082 / PCC 7421)).